The following is a 141-amino-acid chain: Transcription antitermination protein NusB (141 aa).

This sequence belongs to the NusB family.

Its function is as follows. Involved in transcription antitermination. Required for transcription of ribosomal RNA (rRNA) genes. Binds specifically to the boxA antiterminator sequence of the ribosomal RNA (rrn) operons. The polypeptide is Transcription antitermination protein NusB (Fervidobacterium nodosum (strain ATCC 35602 / DSM 5306 / Rt17-B1)).